The sequence spans 299 residues: tRNA dimethylallyltransferase (299 aa).

An ATP-binding site is contributed by 10 to 17 (GATATGKS). Position 12 to 17 (12 to 17 (TATGKS)) interacts with substrate. The interval 35 to 38 (DSRQ) is interaction with substrate tRNA.

Belongs to the IPP transferase family. As to quaternary structure, monomer. The cofactor is Mg(2+).

It catalyses the reaction adenosine(37) in tRNA + dimethylallyl diphosphate = N(6)-dimethylallyladenosine(37) in tRNA + diphosphate. Functionally, catalyzes the transfer of a dimethylallyl group onto the adenine at position 37 in tRNAs that read codons beginning with uridine, leading to the formation of N6-(dimethylallyl)adenosine (i(6)A). This chain is tRNA dimethylallyltransferase, found in Rippkaea orientalis (strain PCC 8801 / RF-1) (Cyanothece sp. (strain PCC 8801)).